The sequence spans 176 residues: Pituitary adenylate cyclase-activating polypeptide (176 aa).

A signal peptide spans 1-24 (MTMCSGARLALLVYGIIMHSSVYS). The propeptide occupies 25 to 79 (SPAAAGLRFPGIRPEEEAYGEDGNPLPDFDGSEPPGAGSPASAPRAAAAWYRPAG). The segment at 39–68 (EEEAYGEDGNPLPDFDGSEPPGAGSPASAP) is disordered. Residues 56–68 (SEPPGAGSPASAP) are compositionally biased toward low complexity. Positions 150–158 (VKKYLAAVL) are important for receptor binding. Leu-158 carries the leucine amide modification. The residue at position 169 (Lys-169) is a Lysine amide. Positions 173 to 176 (IAYL) are excised as a propeptide.

It belongs to the glucagon family.

Its subcellular location is the secreted. Functionally, PACAP is a neuropeptide involved in diverse array of physiological processes through activating the PACAP subfamily of class B1 G protein-coupled receptors: VIP receptor 1 (VIPR1), VIP receptor 2 (VIPR2), and PACAP type I receptor (ADCYAP1R1). Exerts neuroprotective and general cytoprotective effects due to anti-apoptotic, anti-inflammatory, and antioxidant actions. Promotes neuron projection development through the RAPGEF2/Rap1/B-Raf/ERK pathway. In chromaffin cells, induces long-lasting increase of intracellular calcium concentrations and neuroendocrine secretion. Involved in the control of glucose homeostasis, induces insulin secretion by pancreatic beta cells. PACAP exists in two bioactive forms from proteolysis of the same precursor protein, PACAP27 and PACAP38, which differ by eleven amino acid residues in the C-terminus. The polypeptide is Pituitary adenylate cyclase-activating polypeptide (Homo sapiens (Human)).